A 273-amino-acid chain; its full sequence is Cysteine protease S273R (273 aa).

Residues His-168 and Asn-187 contribute to the active site. Gln-226 provides a ligand contact to substrate. Cys-232 serves as the catalytic Nucleophile.

It belongs to the peptidase C63 family.

It is found in the host cytoplasm. The protein resides in the virion. In terms of biological role, cysteine protease that plays several role during infection including processing of the structural polyprotein or inhibition of the host immune response. Catalyzes the maturation of the pp220 and pp62 polyprotein precursors into core-shell proteins. Plays a role in the disruption of host pyroptosis via specific cleavage of gasdermin D/GSDMD. In addition, strongly decreases the host cGAS-STING signaling by targeting IKBKE via its enzymatic activity. Also impairs host FOXJ1-mediated antiviral effect via degradation of FOXJ1. Cleaves host G3BP1 inducing loss of stress granules formation. Interacts with and induces the degradation of host STAT2 via polyubiquitination of the latter. This Ornithodoros (relapsing fever ticks) protein is Cysteine protease S273R.